A 386-amino-acid chain; its full sequence is Ribosomal RNA small subunit methyltransferase H (386 aa).

S-adenosyl-L-methionine is bound by residues 97–99 (GGH), Asp-116, Tyr-143, Asp-167, and Gln-174.

The protein belongs to the methyltransferase superfamily. RsmH family.

The protein localises to the cytoplasm. The enzyme catalyses cytidine(1402) in 16S rRNA + S-adenosyl-L-methionine = N(4)-methylcytidine(1402) in 16S rRNA + S-adenosyl-L-homocysteine + H(+). Its function is as follows. Specifically methylates the N4 position of cytidine in position 1402 (C1402) of 16S rRNA. The polypeptide is Ribosomal RNA small subunit methyltransferase H (Mycolicibacterium paratuberculosis (strain ATCC BAA-968 / K-10) (Mycobacterium paratuberculosis)).